A 63-amino-acid chain; its full sequence is ATP synthase F(0) complex subunit 8 (63 aa).

A helical membrane pass occupies residues 8-24 (MWLLTILSMLLTLFVLF). Position 57 is an N6-acetyllysine (Lys57).

This sequence belongs to the ATPase protein 8 family. In terms of assembly, component of the ATP synthase complex composed at least of ATP5F1A/subunit alpha, ATP5F1B/subunit beta, ATP5MC1/subunit c (homooctomer), MT-ATP6/subunit a, MT-ATP8/subunit 8, ATP5ME/subunit e, ATP5MF/subunit f, ATP5MG/subunit g, ATP5MK/subunit k, ATP5MJ/subunit j, ATP5F1C/subunit gamma, ATP5F1D/subunit delta, ATP5F1E/subunit epsilon, ATP5PF/subunit F6, ATP5PB/subunit b, ATP5PD/subunit d, ATP5PO/subunit OSCP. ATP synthase complex consists of a soluble F(1) head domain (subunits alpha(3) and beta(3)) - the catalytic core - and a membrane F(0) domain - the membrane proton channel (subunits c, a, 8, e, f, g, k and j). These two domains are linked by a central stalk (subunits gamma, delta, and epsilon) rotating inside the F1 region and a stationary peripheral stalk (subunits F6, b, d, and OSCP). Interacts with PRICKLE3.

Its subcellular location is the mitochondrion membrane. Functionally, subunit 8, of the mitochondrial membrane ATP synthase complex (F(1)F(0) ATP synthase or Complex V) that produces ATP from ADP in the presence of a proton gradient across the membrane which is generated by electron transport complexes of the respiratory chain. ATP synthase complex consist of a soluble F(1) head domain - the catalytic core - and a membrane F(1) domain - the membrane proton channel. These two domains are linked by a central stalk rotating inside the F(1) region and a stationary peripheral stalk. During catalysis, ATP synthesis in the catalytic domain of F(1) is coupled via a rotary mechanism of the central stalk subunits to proton translocation. In vivo, can only synthesize ATP although its ATP hydrolase activity can be activated artificially in vitro. Part of the complex F(0) domain. The chain is ATP synthase F(0) complex subunit 8 from Balaenoptera physalus (Fin whale).